A 53-amino-acid chain; its full sequence is Large ribosomal subunit protein eL40 (53 aa).

It belongs to the eukaryotic ribosomal protein eL40 family.

This is Large ribosomal subunit protein eL40 from Pyrobaculum neutrophilum (strain DSM 2338 / JCM 9278 / NBRC 100436 / V24Sta) (Thermoproteus neutrophilus).